Consider the following 334-residue polypeptide: Holliday junction branch migration complex subunit RuvB (334 aa).

Positions 1–182 (MDERLVSTEA…FGVHARLEYY (182 aa)) are large ATPase domain (RuvB-L). Residues Leu-21, Arg-22, Gly-63, Lys-66, Thr-67, Thr-68, 129 to 131 (EDF), Arg-172, Tyr-182, and Arg-219 contribute to the ATP site. Thr-67 is a Mg(2+) binding site. A small ATPAse domain (RuvB-S) region spans residues 183–253 (EQRDLAHIVS…IAEDALERLQ (71 aa)). The tract at residues 256–334 (KLGLDHIDHK…HFQMEVPIRD (79 aa)) is head domain (RuvB-H). Positions 311 and 316 each coordinate DNA.

This sequence belongs to the RuvB family. In terms of assembly, homohexamer. Forms an RuvA(8)-RuvB(12)-Holliday junction (HJ) complex. HJ DNA is sandwiched between 2 RuvA tetramers; dsDNA enters through RuvA and exits via RuvB. An RuvB hexamer assembles on each DNA strand where it exits the tetramer. Each RuvB hexamer is contacted by two RuvA subunits (via domain III) on 2 adjacent RuvB subunits; this complex drives branch migration. In the full resolvosome a probable DNA-RuvA(4)-RuvB(12)-RuvC(2) complex forms which resolves the HJ.

The protein localises to the cytoplasm. The catalysed reaction is ATP + H2O = ADP + phosphate + H(+). The RuvA-RuvB-RuvC complex processes Holliday junction (HJ) DNA during genetic recombination and DNA repair, while the RuvA-RuvB complex plays an important role in the rescue of blocked DNA replication forks via replication fork reversal (RFR). RuvA specifically binds to HJ cruciform DNA, conferring on it an open structure. The RuvB hexamer acts as an ATP-dependent pump, pulling dsDNA into and through the RuvAB complex. RuvB forms 2 homohexamers on either side of HJ DNA bound by 1 or 2 RuvA tetramers; 4 subunits per hexamer contact DNA at a time. Coordinated motions by a converter formed by DNA-disengaged RuvB subunits stimulates ATP hydrolysis and nucleotide exchange. Immobilization of the converter enables RuvB to convert the ATP-contained energy into a lever motion, pulling 2 nucleotides of DNA out of the RuvA tetramer per ATP hydrolyzed, thus driving DNA branch migration. The RuvB motors rotate together with the DNA substrate, which together with the progressing nucleotide cycle form the mechanistic basis for DNA recombination by continuous HJ branch migration. Branch migration allows RuvC to scan DNA until it finds its consensus sequence, where it cleaves and resolves cruciform DNA. The chain is Holliday junction branch migration complex subunit RuvB from Bacillus pumilus (strain SAFR-032).